Consider the following 106-residue polypeptide: Ribosomal processing cysteine protease Prp (106 aa).

His-22 functions as the Proton donor in the catalytic mechanism. The active-site Nucleophile is the Cys-34.

This sequence belongs to the Prp family. As to quaternary structure, homodimer. A mutant protein unable to cleave bL27 copurifies with its substrate.

Its activity is regulated as follows. Not inhibited by short peptide analogs; a 6-mer inhibits only 20% while a 13-mer inhibits 63%. Inhibited by Ac-KLNLQFF-CH(2) which binds covalantly to Cys-34. Inhibited by mersalyl acid (C13H18HgNO6). An essential cysteine protease that cleaves the N-terminal 9 amino acids from ribosomal protein bL27. Also acts as an N-terminal protease on the major capsid and scaffold assembly proteins of bacteriophage 80alpha. Cleavage of the N-terminus of bL27 (and thus this enzyme) is essential for growth; it cannot be replaced by a 'pre-cleaved' or non-cleavable form of bL27. Might serve a chaperone function during ribosome assembly. This is Ribosomal processing cysteine protease Prp from Staphylococcus aureus (strain NCTC 8325 / PS 47).